A 206-amino-acid polypeptide reads, in one-letter code: Platelet glycoprotein Ib beta chain (206 aa).

An N-terminal signal peptide occupies residues 1-25 (MGSGPRGALSLLLLLLAPPSRPAAG). 2 disulfides stabilise this stretch: cysteine 26–cysteine 32 and cysteine 30–cysteine 39. Positions 27–55 (PAPCSCAGTLVDCGRRGLTWASLPTAFPV) constitute an LRRNT domain. At 27-147 (PAPCSCAGTL…RAACAPGPLC (121 aa)) the chain is on the extracellular side. An LRR repeat occupies 60–83 (LVLTGNNLTALPPGLLDALPALRT). N-linked (GlcNAc...) asparagine glycosylation is present at asparagine 66. One can recognise an LRRCT domain in the interval 89-143 (NPWRCDCRLVPLRAWLAGRPERAPYRDLRCVAPPALRGRLLPYLAEDELRAACAP). 2 cysteine pairs are disulfide-bonded: cysteine 93–cysteine 118 and cysteine 95–cysteine 141. Residues 148-172 (WGALAAQLALLGLGLLHALLLVLLL) form a helical membrane-spanning segment. Over 173–206 (CRLRRLRARARARAAARLSLTDPLVAERAGTDES) the chain is Cytoplasmic. Serine 191 bears the Phosphoserine; by PKA mark. Threonine 193 carries the phosphothreonine modification.

In terms of assembly, two GP-Ib beta are disulfide-linked to one GP-Ib alpha. GP-IX is complexed with the GP-Ib heterodimer via a non covalent linkage. Interacts with TRAF4. Expressed in heart and brain.

It is found in the membrane. In terms of biological role, gp-Ib, a surface membrane protein of platelets, participates in the formation of platelet plugs by binding to von Willebrand factor, which is already bound to the subendothelium. This chain is Platelet glycoprotein Ib beta chain (GP1BB), found in Homo sapiens (Human).